The following is a 33-amino-acid chain: Protamine TP17 (33 aa).

Positions 1–33 (MPRRRRSSSRPVRRRRRPRVSRRRRRRGRRRRR) are disordered.

As to expression, testis.

It is found in the nucleus. Its subcellular location is the chromosome. Functionally, protamines substitute for histones in the chromatin of sperm during the haploid phase of spermatogenesis. They compact sperm DNA into a highly condensed, stable and inactive complex. This chain is Protamine TP17, found in Oncorhynchus mykiss (Rainbow trout).